We begin with the raw amino-acid sequence, 386 residues long: Succinate--CoA ligase [ADP-forming] subunit beta (386 aa).

Residues 9-244 (KEVLRKYGVV…LDEEDADEIE (236 aa)) form the ATP-grasp domain. ATP contacts are provided by residues lysine 46, 53 to 55 (GRG), glutamate 99, alanine 102, and glutamate 107. Mg(2+)-binding residues include asparagine 199 and aspartate 213. Substrate-binding positions include asparagine 264 and 321 to 323 (GIM).

Belongs to the succinate/malate CoA ligase beta subunit family. In terms of assembly, heterotetramer of two alpha and two beta subunits. Mg(2+) serves as cofactor.

The catalysed reaction is succinate + ATP + CoA = succinyl-CoA + ADP + phosphate. The enzyme catalyses GTP + succinate + CoA = succinyl-CoA + GDP + phosphate. Its pathway is carbohydrate metabolism; tricarboxylic acid cycle; succinate from succinyl-CoA (ligase route): step 1/1. Its function is as follows. Succinyl-CoA synthetase functions in the citric acid cycle (TCA), coupling the hydrolysis of succinyl-CoA to the synthesis of either ATP or GTP and thus represents the only step of substrate-level phosphorylation in the TCA. The beta subunit provides nucleotide specificity of the enzyme and binds the substrate succinate, while the binding sites for coenzyme A and phosphate are found in the alpha subunit. The polypeptide is Succinate--CoA ligase [ADP-forming] subunit beta (Azoarcus sp. (strain BH72)).